Here is a 679-residue protein sequence, read N- to C-terminus: Methionine--tRNA ligase (679 aa).

The 'HIGH' region motif lies at 14-24 (PYANGSIHLGH). Residues C145, C148, C158, and C161 each coordinate Zn(2+). Residues 331-335 (KMSKS) carry the 'KMSKS' region motif. ATP is bound at residue K334. The tRNA-binding domain maps to 577–679 (AFAAVDLRIA…SGAKPGQRVK (103 aa)).

The protein belongs to the class-I aminoacyl-tRNA synthetase family. MetG type 1 subfamily. In terms of assembly, homodimer. Zn(2+) serves as cofactor.

The protein localises to the cytoplasm. The catalysed reaction is tRNA(Met) + L-methionine + ATP = L-methionyl-tRNA(Met) + AMP + diphosphate. Its function is as follows. Is required not only for elongation of protein synthesis but also for the initiation of all mRNA translation through initiator tRNA(fMet) aminoacylation. This chain is Methionine--tRNA ligase, found in Pseudomonas paraeruginosa (strain DSM 24068 / PA7) (Pseudomonas aeruginosa (strain PA7)).